The chain runs to 81 residues: Acyl carrier protein (81 aa).

In terms of domain architecture, Carrier spans 4-79; sequence DEVYSRVRKI…DAVNYILSKK (76 aa). Residue S39 is modified to O-(pantetheine 4'-phosphoryl)serine.

This sequence belongs to the acyl carrier protein (ACP) family. 4'-phosphopantetheine is transferred from CoA to a specific serine of apo-ACP by AcpS. This modification is essential for activity because fatty acids are bound in thioester linkage to the sulfhydryl of the prosthetic group.

The protein localises to the cytoplasm. It participates in lipid metabolism; fatty acid biosynthesis. Carrier of the growing fatty acid chain in fatty acid biosynthesis. The chain is Acyl carrier protein from Synechococcus sp. (strain JA-3-3Ab) (Cyanobacteria bacterium Yellowstone A-Prime).